The sequence spans 837 residues: Striatin-interacting protein 1 (837 aa).

An N-acetylmethionine modification is found at Met-1. Disordered stretches follow at residues 1-67 (MEPA…ESPD) and 333-423 (AASP…KGLP). Residues 18 to 35 (PQPPPPPPPATAQPPPGA) show a composition bias toward pro residues. Over residues 47-60 (KAREFNRNQRKDSE) the composition is skewed to basic and acidic residues. 3 positions are modified to phosphoserine: Ser-59, Ser-335, and Ser-339. Over residues 356 to 377 (KALIKQDNLDAFNERDPYKADD) the composition is skewed to basic and acidic residues. Residues 378 to 391 (SREEEEENDDDSSL) show a composition bias toward acidic residues. Residue Ser-788 is modified to Phosphoserine. Residues 796–837 (DNCLQSVLGQRVDLPEDFQMNYDLWLEREVFSKPISWEELLQ) are required for STRIPAK core complex formation.

Belongs to the STRIP family. Part of the core of STRIPAK complexes composed of PP2A catalytic and scaffolding subunits, the striatins (PP2A regulatory subunits), the striatin-associated proteins MOB4, STRIP1 and STRIP2, PDCD10 and members of the STE20 kinases, such as STK24 and STK26. The STRIPAK complex can be extended by adapter proteins such as SLMAP:SIKE1, CTTNBP2 or CTTNBP2NL. Interacts with CDC42BPB. Interacts with CTTNBP2NL.

It is found in the cytoplasm. Its function is as follows. Plays a role in the regulation of cell morphology and cytoskeletal organization. Required in the cortical actin filament dynamics and cell shape. Part of the striatin-interacting phosphatase and kinase (STRIPAK) complexes. STRIPAK complexes have critical roles in protein (de)phosphorylation and are regulators of multiple signaling pathways including Hippo, MAPK, nuclear receptor and cytoskeleton remodeling. Different types of STRIPAK complexes are involved in a variety of biological processes such as cell growth, differentiation, apoptosis, metabolism and immune regulation. In Mus musculus (Mouse), this protein is Striatin-interacting protein 1 (Strip1).